A 519-amino-acid chain; its full sequence is tRNA-2-methylthio-N(6)-dimethylallyladenosine synthase (519 aa).

Positions Met-1–Lys-23 are disordered. Residues Lys-7 to Ala-17 are compositionally biased toward polar residues. An MTTase N-terminal domain is found at Lys-76–Phe-194. Residues Cys-85, Cys-121, Cys-155, Cys-231, Cys-235, and Cys-238 each coordinate [4Fe-4S] cluster. Residues Arg-217–Lys-450 enclose the Radical SAM core domain. The 64-residue stretch at Lys-450 to Glu-513 folds into the TRAM domain.

This sequence belongs to the methylthiotransferase family. MiaB subfamily. As to quaternary structure, monomer. Requires [4Fe-4S] cluster as cofactor.

It localises to the cytoplasm. The catalysed reaction is N(6)-dimethylallyladenosine(37) in tRNA + (sulfur carrier)-SH + AH2 + 2 S-adenosyl-L-methionine = 2-methylsulfanyl-N(6)-dimethylallyladenosine(37) in tRNA + (sulfur carrier)-H + 5'-deoxyadenosine + L-methionine + A + S-adenosyl-L-homocysteine + 2 H(+). Catalyzes the methylthiolation of N6-(dimethylallyl)adenosine (i(6)A), leading to the formation of 2-methylthio-N6-(dimethylallyl)adenosine (ms(2)i(6)A) at position 37 in tRNAs that read codons beginning with uridine. In Oceanobacillus iheyensis (strain DSM 14371 / CIP 107618 / JCM 11309 / KCTC 3954 / HTE831), this protein is tRNA-2-methylthio-N(6)-dimethylallyladenosine synthase.